The chain runs to 253 residues: 5'/3'-nucleotidase SurE (253 aa).

Residues aspartate 8, aspartate 9, serine 39, and asparagine 92 each contribute to the a divalent metal cation site.

This sequence belongs to the SurE nucleotidase family. It depends on a divalent metal cation as a cofactor.

The protein resides in the cytoplasm. The catalysed reaction is a ribonucleoside 5'-phosphate + H2O = a ribonucleoside + phosphate. It carries out the reaction a ribonucleoside 3'-phosphate + H2O = a ribonucleoside + phosphate. It catalyses the reaction [phosphate](n) + H2O = [phosphate](n-1) + phosphate + H(+). Functionally, nucleotidase with a broad substrate specificity as it can dephosphorylate various ribo- and deoxyribonucleoside 5'-monophosphates and ribonucleoside 3'-monophosphates with highest affinity to 3'-AMP. Also hydrolyzes polyphosphate (exopolyphosphatase activity) with the preference for short-chain-length substrates (P20-25). Might be involved in the regulation of dNTP and NTP pools, and in the turnover of 3'-mononucleotides produced by numerous intracellular RNases (T1, T2, and F) during the degradation of various RNAs. This chain is 5'/3'-nucleotidase SurE, found in Shigella flexneri serotype 5b (strain 8401).